Reading from the N-terminus, the 295-residue chain is Small ribosomal subunit protein uS2 (295 aa).

Ser-2 bears the N-acetylserine mark. A Phosphoserine modification is found at Ser-43. Lys-52 bears the N6-acetyllysine mark. The segment at 54 to 113 (TWEKLLLAARAIVAIENPADVSVISSRNTGQRAVLKFAAATGATPIAGRFTPGTFTNQIQ) is interaction with PPP1R16B. Lys-89 is modified (N6-acetyllysine; alternate). Lys-89 participates in a covalent cross-link: Glycyl lysine isopeptide (Lys-Gly) (interchain with G-Cter in SUMO2); alternate. Phosphothreonine is present on Thr-97. Laminin-binding regions lie at residues 161 to 180 (IPCN…MLAR) and 205 to 229 (RDPE…EFQG). [DE]-W-[ST] repeat units lie at residues 230-232 (EWT), 247-249 (DWS), 266-268 (DWS), 275-277 (DWS), and 293-295 (EWS). Residues 242-295 (QPEVADWSEGVQVPSVPIQQFPTEDWSAQPSTEDWSAAPTAQATEWVGTTTEWS) are laminin-binding. The segment at 266 to 295 (DWSAQPSTEDWSAAPTAQATEWVGTTTEWS) is disordered.

It belongs to the universal ribosomal protein uS2 family. Monomer (37LRP) and homodimer (67LR). Component of the small ribosomal subunit. Mature ribosomes consist of a small (40S) and a large (60S) subunit. The 40S subunit contains about 33 different proteins and 1 molecule of RNA (18S). The 60S subunit contains about 49 different proteins and 3 molecules of RNA (28S, 5.8S and 5S). Interacts with RPS21. Interacts with several laminins including at least LAMB1. Interacts with MDK. The mature dimeric form interacts with PPP1R16B (via its fourth ankyrin repeat). Interacts with PPP1CA only in the presence of PPP1R16B. Acylated. Acylation may be a prerequisite for conversion of the monomeric 37 kDa laminin receptor precursor (37LRP) to the mature dimeric 67 kDa laminin receptor (67LR), and may provide a mechanism for membrane association. In terms of processing, cleaved by stromelysin-3 (ST3) at the cell surface. Cleavage by stromelysin-3 may be a mechanism to alter cell-extracellular matrix interactions.

It localises to the cell membrane. The protein localises to the cytoplasm. It is found in the nucleus. Required for the assembly and/or stability of the 40S ribosomal subunit. Required for the processing of the 20S rRNA-precursor to mature 18S rRNA in a late step of the maturation of 40S ribosomal subunits. Also functions as a cell surface receptor for laminin. Plays a role in cell adhesion to the basement membrane and in the consequent activation of signaling transduction pathways. May play a role in cell fate determination and tissue morphogenesis. Also acts as a receptor for several other ligands, including the pathogenic prion protein, viruses, and bacteria. Acts as a PPP1R16B-dependent substrate of PPP1CA. This is Small ribosomal subunit protein uS2 from Bos taurus (Bovine).